A 307-amino-acid chain; its full sequence is Auxiliary protein GraX (307 aa).

Homodimer. Interacts with GraR and GraS.

Functionally, plays a role in resistance against cationic antimicrobial peptides (CAMPs). Facilitates the activation of GraS to transduce the signal to GraR. In Staphylococcus aureus (strain NCTC 8325 / PS 47), this protein is Auxiliary protein GraX (graX).